Here is a 215-residue protein sequence, read N- to C-terminus: Imidazole glycerol phosphate synthase subunit HisH (215 aa).

Residues 7–215 (TIAVIDYGMG…LLKNFVEWQP (209 aa)) enclose the Glutamine amidotransferase type-1 domain. The active-site Nucleophile is C86. Residues H195 and E197 contribute to the active site.

Heterodimer of HisH and HisF.

Its subcellular location is the cytoplasm. The enzyme catalyses 5-[(5-phospho-1-deoxy-D-ribulos-1-ylimino)methylamino]-1-(5-phospho-beta-D-ribosyl)imidazole-4-carboxamide + L-glutamine = D-erythro-1-(imidazol-4-yl)glycerol 3-phosphate + 5-amino-1-(5-phospho-beta-D-ribosyl)imidazole-4-carboxamide + L-glutamate + H(+). It carries out the reaction L-glutamine + H2O = L-glutamate + NH4(+). It participates in amino-acid biosynthesis; L-histidine biosynthesis; L-histidine from 5-phospho-alpha-D-ribose 1-diphosphate: step 5/9. IGPS catalyzes the conversion of PRFAR and glutamine to IGP, AICAR and glutamate. The HisH subunit catalyzes the hydrolysis of glutamine to glutamate and ammonia as part of the synthesis of IGP and AICAR. The resulting ammonia molecule is channeled to the active site of HisF. This Dechloromonas aromatica (strain RCB) protein is Imidazole glycerol phosphate synthase subunit HisH.